Here is a 102-residue protein sequence, read N- to C-terminus: Integration host factor subunit beta (102 aa).

The protein belongs to the bacterial histone-like protein family. As to quaternary structure, heterodimer of an alpha and a beta chain.

In terms of biological role, this protein is one of the two subunits of integration host factor, a specific DNA-binding protein that functions in genetic recombination as well as in transcriptional and translational control. The sequence is that of Integration host factor subunit beta from Rhodopseudomonas palustris (strain BisA53).